The primary structure comprises 65 residues: Large ribosomal subunit protein bL33m (65 aa).

The N-terminal 8 residues, 1 to 8 (MFLTTANL), are a transit peptide targeting the mitochondrion.

Belongs to the bacterial ribosomal protein bL33 family. In terms of assembly, component of the mitochondrial ribosome large subunit (39S) which comprises a 16S rRNA and about 50 distinct proteins.

The protein localises to the mitochondrion. This Tetraodon nigroviridis (Spotted green pufferfish) protein is Large ribosomal subunit protein bL33m (mrpl33).